A 1154-amino-acid polypeptide reads, in one-letter code: DNA-directed RNA polymerase subunit beta (1154 aa).

The segment covering 1108–1123 (ELGIDIQGEDRSERAG) has biased composition (basic and acidic residues). Positions 1108-1136 (ELGIDIQGEDRSERAGEPASPDEMDDEEE) are disordered. The span at 1127-1136 (SPDEMDDEEE) shows a compositional bias: acidic residues.

It belongs to the RNA polymerase beta chain family. The RNAP catalytic core consists of 2 alpha, 1 beta, 1 beta' and 1 omega subunit. When a sigma factor is associated with the core the holoenzyme is formed, which can initiate transcription.

It carries out the reaction RNA(n) + a ribonucleoside 5'-triphosphate = RNA(n+1) + diphosphate. Its function is as follows. DNA-dependent RNA polymerase catalyzes the transcription of DNA into RNA using the four ribonucleoside triphosphates as substrates. The chain is DNA-directed RNA polymerase subunit beta from Heliobacterium modesticaldum (strain ATCC 51547 / Ice1).